A 324-amino-acid chain; its full sequence is E3 ubiquitin-protein ligase SIAH2 (324 aa).

Over residues 1 to 15 the composition is skewed to polar residues; it reads MSRPSSTGPSANKPC. The tract at residues 1 to 42 is disordered; it reads MSRPSSTGPSANKPCSKQPPPQPQHTPSPAAPPAAATISAAG. Ser-6 carries the post-translational modification Phosphoserine. Phosphoserine; by DYRK2 is present on Ser-16. A compositionally biased stretch (pro residues) spans 17–32; it reads KQPPPQPQHTPSPAAP. The residue at position 26 (Thr-26) is a Phosphothreonine; by DYRK2. Ser-28 is modified (phosphoserine; by DYRK2 and MAPK14). Over residues 33-42 the composition is skewed to low complexity; it reads PAAATISAAG. Ser-68 is subject to Phosphoserine; by DYRK2. The RING-type zinc-finger motif lies at 80 to 115; the sequence is CPVCFDYVLPPILQCQAGHLVCNQCRQKLSCCPTCR. Thr-119 carries the post-translational modification Phosphothreonine; by DYRK2. Residues 130-322 form an SBD region; that stretch reads VASAVLFPCK…LGINVTISTC (193 aa). Residues 133–193 form an SIAH-type zinc finger; the sequence is AVLFPCKYAT…VMSHLMHAHK (61 aa). Cys-138, Cys-145, His-157, Cys-161, Cys-168, Cys-175, His-187, and His-192 together coordinate Zn(2+).

Belongs to the SINA (Seven in absentia) family. In terms of assembly, homodimer. Interacts with UBE2E2. Interacts with PEG3. Interacts with VAV1, without mediating its ubiquitin-mediated degradation. Interacts with CACYBP/SIP. Probable component of some large E3 complex possibly composed of UBE2D1, SIAH2, CACYBP/SIP, SKP1, APC and TBL1X. Interacts with PEG10, which may inhibit its activity. Interacts with EGLN2 and SNCAIP. Interacts with DYRK2. Interacts with NR1D1 and NR1D2. Interacts with DCC. Interacts with AXIN1. Post-translationally, phosphorylated at Ser-28 by MAPK14, which mediates the degradation by the proteasome of EGLN3. Phosphorylated at Ser-28 by DYRK2; this increases the ubiquitin ligase activity and promotes degradation of EGLN3. In terms of tissue distribution, widely expressed at low level.

The protein localises to the cytoplasm. It is found in the nucleus. The enzyme catalyses S-ubiquitinyl-[E2 ubiquitin-conjugating enzyme]-L-cysteine + [acceptor protein]-L-lysine = [E2 ubiquitin-conjugating enzyme]-L-cysteine + N(6)-ubiquitinyl-[acceptor protein]-L-lysine.. It participates in protein modification; protein ubiquitination. Inhibited by interaction with SNCAIP (isoform 2, but not isoform 1). May be inhibited by interaction with PEG10. Functionally, E3 ubiquitin-protein ligase that mediates ubiquitination and subsequent proteasomal degradation of target proteins. E3 ubiquitin ligases accept ubiquitin from an E2 ubiquitin-conjugating enzyme in the form of a thioester and then directly transfers the ubiquitin to targeted substrates. Mediates E3 ubiquitin ligase activity either through direct binding to substrates or by functioning as the essential RING domain subunit of larger E3 complexes. Triggers the ubiquitin-mediated degradation of many substrates, including proteins involved in transcription regulation (GPS2, POU2AF1, PML, NCOR1), a cell surface receptor (DCC), an antiapoptotic protein (BAG1), and a protein involved in synaptic vesicle function in neurons (SYP). Mediates ubiquitination and proteasomal degradation of DYRK2 in response to hypoxia. It is thereby involved in apoptosis, tumor suppression, cell cycle, transcription and signaling processes. Has some overlapping function with SIAH1. Triggers the ubiquitin-mediated degradation of TRAF2, whereas SIAH1 does not. Promotes monoubiquitination of SNCA. Regulates cellular clock function via ubiquitination of the circadian transcriptional repressors NR1D1 and NR1D2 leading to their proteasomal degradation. Plays an important role in mediating the rhythmic degradation/clearance of NR1D1 and NR1D2 contributing to their circadian profile of protein abundance. Mediates ubiquitination and degradation of EGLN2 and EGLN3 in response to the unfolded protein response (UPR), leading to their degradation and subsequent stabilization of ATF4. Also part of the Wnt signaling pathway in which it mediates the Wnt-induced ubiquitin-mediated proteasomal degradation of AXIN1. The protein is E3 ubiquitin-protein ligase SIAH2 (SIAH2) of Homo sapiens (Human).